The sequence spans 1154 residues: Paired amphipathic helix protein pst3 (1154 aa).

Disordered regions lie at residues 1–71 and 91–110; these read MDVM…RSVT and SGKD…SSSN. The span at 9–27 shows a compositional bias: basic and acidic residues; the sequence is DSERDNPGDKVETQSDKNH. Composition is skewed to polar residues over residues 32–45 and 100–110; these read SPSQ…TSLH and QNAEGLSSSSN. The region spanning 111 to 181 is the PAH 1 domain; that stretch reads RPLDVNDALS…EGFNTFLPSG (71 aa). Disordered regions lie at residues 199-249 and 321-376; these read GTPM…STEN and DNVD…KTSR. The span at 228–241 shows a compositional bias: low complexity; the sequence is STSPTDSQPQPSAP. The 71-residue stretch at 252-322 folds into the PAH 2 domain; that stretch reads PRVDFNYAIA…EEFKLFLPDN (71 aa). Polar residues-rich tracts occupy residues 323-337 and 365-376; these read VDST…QKSP and AQISRSISKTSR. In terms of domain architecture, PAH 3 spans 403 to 472; sequence SPYAATQEEL…LWFSEFIRWS (70 aa). Positions 797-824 are disordered; it reads NSNNTNVSFQTDETQTEDETMSDIHPDD.

The protein localises to the nucleus. This chain is Paired amphipathic helix protein pst3 (pst3), found in Schizosaccharomyces pombe (strain 972 / ATCC 24843) (Fission yeast).